The chain runs to 411 residues: Glutamyl-tRNA reductase (411 aa).

Substrate contacts are provided by residues 48–51, serine 106, 111–113, and glutamine 117; these read TCNR and EDQ. Cysteine 49 serves as the catalytic Nucleophile. Position 186-191 (186-191) interacts with NADP(+); that stretch reads GAGDMG.

The protein belongs to the glutamyl-tRNA reductase family. As to quaternary structure, homodimer.

It carries out the reaction (S)-4-amino-5-oxopentanoate + tRNA(Glu) + NADP(+) = L-glutamyl-tRNA(Glu) + NADPH + H(+). The protein operates within porphyrin-containing compound metabolism; protoporphyrin-IX biosynthesis; 5-aminolevulinate from L-glutamyl-tRNA(Glu): step 1/2. Catalyzes the NADPH-dependent reduction of glutamyl-tRNA(Glu) to glutamate 1-semialdehyde (GSA). This chain is Glutamyl-tRNA reductase, found in Clostridium novyi (strain NT).